Reading from the N-terminus, the 359-residue chain is Centromere-binding protein 1 (359 aa).

Positions 1–262 (MSGKRSYQDD…SHKEVERRRR (262 aa)) are disordered. Residues 55-78 (KENKENRDGDKVGDDEHDVVKGES) show a composition bias toward basic and acidic residues. Residues 120 to 161 (GDEDEDEDEEEEEDEDDHVDIDDVDKDPDAVIDEDDDEEDED) show a composition bias toward acidic residues. Residues 249–259 (QRKESHKEVER) show a composition bias toward basic and acidic residues. In terms of domain architecture, bHLH spans 249–297 (QRKESHKEVERRRRQNINTAIEKLSDLLPVKETSKAAILSRAAEYIQKM).

In terms of assembly, binds DNA as a dimer.

It localises to the nucleus. The protein resides in the chromosome. Its subcellular location is the centromere. Functionally, required for chromosome stability and methionine prototrophy. It is involved in chromosomal segregation. Binds to a highly conserved DNA sequence (5'-RTCACRTG-3'), called CDEI, found in centromeres and in several promoters. The sequence is that of Centromere-binding protein 1 (CBF1) from Kluyveromyces lactis (strain ATCC 8585 / CBS 2359 / DSM 70799 / NBRC 1267 / NRRL Y-1140 / WM37) (Yeast).